A 152-amino-acid polypeptide reads, in one-letter code: MPKRVQIVLNEDILSLGMDGDLVEVAPGYARNFLLPFGKAVPLTPAVMKQVEHRRAKEAERQAALKQEAVDFKTALSTIGRFTVKKQTGEDNVLFGTVTNGDVAEAIETATKKEIDRRDIVVPEIHRTGKYTVTVKLHSEVTAEINLEVVGY.

This sequence belongs to the bacterial ribosomal protein bL9 family.

In terms of biological role, binds to the 23S rRNA. This is Large ribosomal subunit protein bL9 from Synechococcus sp. (strain CC9605).